Reading from the N-terminus, the 746-residue chain is Polyribonucleotide nucleotidyltransferase (746 aa).

Residues Asp493 and Asp499 each coordinate Mg(2+). The 60-residue stretch at 560–619 folds into the KH domain; sequence PRIITLQINPEKIGALIGPGGKTIRSITEATGAQIDIEEDGRVYISTADAAAAQQAVAMV. In terms of domain architecture, S1 motif spans 629–698; it reads GDIFLGKVVR…GTGKVSLSRR (70 aa). Residues 704-746 are disordered; the sequence is ETAEDRRAAGAGRGLRDGGRSSGSERSGDRSPRSDDRPRPRRR. Basic and acidic residues-rich tracts occupy residues 706–722 and 729–746; these read AEDR…RDGG and RSGD…PRRR.

This sequence belongs to the polyribonucleotide nucleotidyltransferase family. Mg(2+) serves as cofactor.

Its subcellular location is the cytoplasm. It catalyses the reaction RNA(n+1) + phosphate = RNA(n) + a ribonucleoside 5'-diphosphate. Its function is as follows. Involved in mRNA degradation. Catalyzes the phosphorolysis of single-stranded polyribonucleotides processively in the 3'- to 5'-direction. The protein is Polyribonucleotide nucleotidyltransferase of Roseiflexus castenholzii (strain DSM 13941 / HLO8).